The chain runs to 886 residues: Peptidyl-lysine N-acetyltransferase PatZ (886 aa).

Residues 487–523 (QPILQAYGMNTLPTWIASDSTEAVHIAEQIGYPVALK) enclose the ATP-grasp domain. In terms of domain architecture, N-acetyltransferase spans 726 to 881 (CLFRPILPED…GIVGLTLNLA (156 aa)).

This sequence in the N-terminal section; belongs to the acetate CoA ligase alpha subunit family. The protein in the central section; belongs to the acetate CoA ligase beta subunit family. As to quaternary structure, stable tetramer in solution. Oligomerizes to an octameric form by autoacetylation. Post-translationally, autoacetylated. Deacetylated by CobB.

The enzyme catalyses L-lysyl-[protein] + acetyl-CoA = N(6)-acetyl-L-lysyl-[protein] + CoA + H(+). Functionally, catalyzes the acetyl-CoA-dependent acetylation of lysine residues of a large number of target proteins. Acetylates RNase R in exponential phase cells and RNase II. Required for the glucose-dependent acetylation on multiple lysines of alpha, beta and beta' RNAP subunits. Also acetylates acetyl-coenzyme A synthetase (Acs) and the chromosomal replication initiator protein DnaA, and inhibits their activity. Overexpression leads to the acetylation of a large number of additional proteins and inhibits motility. This chain is Peptidyl-lysine N-acetyltransferase PatZ, found in Escherichia coli (strain K12).